The primary structure comprises 699 residues: Elongation factor G (699 aa).

The region spanning 8 to 288 (EDYRNFGIMA…AVVDYLPSPI (281 aa)) is the tr-type G domain. GTP contacts are provided by residues 17-24 (AHIDAGKT), 86-90 (DTPGH), and 140-143 (NKMD).

The protein belongs to the TRAFAC class translation factor GTPase superfamily. Classic translation factor GTPase family. EF-G/EF-2 subfamily.

The protein localises to the cytoplasm. Catalyzes the GTP-dependent ribosomal translocation step during translation elongation. During this step, the ribosome changes from the pre-translocational (PRE) to the post-translocational (POST) state as the newly formed A-site-bound peptidyl-tRNA and P-site-bound deacylated tRNA move to the P and E sites, respectively. Catalyzes the coordinated movement of the two tRNA molecules, the mRNA and conformational changes in the ribosome. The polypeptide is Elongation factor G (Rhizobium meliloti (strain 1021) (Ensifer meliloti)).